Reading from the N-terminus, the 813-residue chain is MDASALERDAVQFARLAVQRDHEGRYSEAVFYYKEAAQALIYAEMAGSSLERIQEKINEYLERVQALHSAVQSKSTDPLKSKHQLDLERAHFLVTQAFDEDEKGNVEDAIELYTEAVELCLKTSSETADKTLQNKLKQLARQALDRAEALSEPLTKPFCKLKSANMKTKTPPVRTHFPLGPNPFVEKPQAFISPQSCDAQGQKYTAEEIEVLRTTSKINGVEYVPFMSVDLRERFAYPMPFCDRLGKLPLSPKQKTTFSKWVRPEDLTNNPTMIYTVSSFSIKQTIVSDCSFVASLAISAAYERRFNKKLITSIIYPQNKDGEPEYNPCGKYMVKLHLNGVPRKVIIDDQLPVDHKGELLCSYSNNKSELWVSLIEKAYMKVMGGYDFPGSNSNIDLHALTGWIPERIAMHSDSQTFSKDNSFRMLYQRFHKGDVLITASTGVMTEAEGEKWGLVPTHAYAVLDIREFKGLRFIQLKNPWSHLRWKGRYSENDVKNWTPELQKYLNFDPRTAQKIDNGIFWISWDDLCQYYDVVYLSWNPALFKESTCIHSTWDAKQGPVKDAYSLANNPQYKLEVQCPQGGAAVWVLLSRHITDKDDFANNREFITMVVYKTDGKKVYYPADPPPYIDGIRINSPHYLTKIKLTTPGTHTFTLVVSQYEKQNTIHYTVRVYSACSFTFSKIPSPYTLSKRINGKWSGQSAGGCGNFQETHKNNPIYQFHIDKTGPLLIELRGPRQYSVGFEVVAVSIMGDPGPHGFQRKSSGDYRCGFCYLELENIPAGIFNIIPSTFLPKQEGPFFLDFNSTVPIKTTQLQ.

Residue M1 is modified to N-acetylmethionine. T95 bears the Phosphothreonine mark. Positions 232–540 (RERFAYPMPF…YDVVYLSWNP (309 aa)) constitute a Calpain catalytic domain. Catalysis depends on residues C290, H458, and N478. The tract at residues 541–701 (ALFKESTCIH…INGKWSGQSA (161 aa)) is domain III. Residues 702 to 813 (GGCGNFQETH…TVPIKTTQLQ (112 aa)) are domain N.

The protein belongs to the peptidase C2 family. Ubiquitous.

The protein localises to the nucleus. Functionally, calcium-regulated non-lysosomal thiol-protease. The polypeptide is Calpain-7 (Capn7) (Mus musculus (Mouse)).